Here is a 286-residue protein sequence, read N- to C-terminus: Orotidine 5'-phosphate decarboxylase (286 aa).

Residues D35, 57-59, 89-98, Y239, and R257 contribute to the substrate site; these read KTH and DRKFADIGNT. K91 acts as the Proton donor in catalysis.

It belongs to the OMP decarboxylase family.

It carries out the reaction orotidine 5'-phosphate + H(+) = UMP + CO2. It functions in the pathway pyrimidine metabolism; UMP biosynthesis via de novo pathway; UMP from orotate: step 2/2. This is Orotidine 5'-phosphate decarboxylase (URA3) from Yarrowia lipolytica (strain CLIB 122 / E 150) (Yeast).